The chain runs to 189 residues: Ribosome maturation factor RimM (189 aa).

A PRC barrel domain is found at 96-169 (EDEFYYADLE…TLLIDPLAAG (74 aa)).

Belongs to the RimM family. As to quaternary structure, binds ribosomal protein uS19.

The protein localises to the cytoplasm. In terms of biological role, an accessory protein needed during the final step in the assembly of 30S ribosomal subunit, possibly for assembly of the head region. Essential for efficient processing of 16S rRNA. May be needed both before and after RbfA during the maturation of 16S rRNA. It has affinity for free ribosomal 30S subunits but not for 70S ribosomes. The sequence is that of Ribosome maturation factor RimM from Rhizobium johnstonii (strain DSM 114642 / LMG 32736 / 3841) (Rhizobium leguminosarum bv. viciae).